The chain runs to 275 residues: Trans-aconitate 2-methyltransferase (275 aa).

Belongs to the methyltransferase superfamily. Tam family.

It localises to the cytoplasm. The catalysed reaction is trans-aconitate + S-adenosyl-L-methionine = (E)-3-(methoxycarbonyl)pent-2-enedioate + S-adenosyl-L-homocysteine. Its function is as follows. Catalyzes the S-adenosylmethionine monomethyl esterification of trans-aconitate. This Pseudomonas paraeruginosa (strain DSM 24068 / PA7) (Pseudomonas aeruginosa (strain PA7)) protein is Trans-aconitate 2-methyltransferase.